We begin with the raw amino-acid sequence, 392 residues long: Formate-dependent phosphoribosylglycinamide formyltransferase (392 aa).

Residues Glu-22 to Leu-23 and Glu-82 each bind N(1)-(5-phospho-beta-D-ribosyl)glycinamide. ATP contacts are provided by residues Arg-114, Lys-155, Ser-160 to Gln-165, Glu-195 to Val-198, and Glu-203. One can recognise an ATP-grasp domain in the interval Arg-119 to Leu-308. Residues Glu-267 and Glu-279 each coordinate Mg(2+). Residues Asp-286, Lys-355, and Arg-362–Arg-363 contribute to the N(1)-(5-phospho-beta-D-ribosyl)glycinamide site.

Belongs to the PurK/PurT family. As to quaternary structure, homodimer.

The enzyme catalyses N(1)-(5-phospho-beta-D-ribosyl)glycinamide + formate + ATP = N(2)-formyl-N(1)-(5-phospho-beta-D-ribosyl)glycinamide + ADP + phosphate + H(+). Its pathway is purine metabolism; IMP biosynthesis via de novo pathway; N(2)-formyl-N(1)-(5-phospho-D-ribosyl)glycinamide from N(1)-(5-phospho-D-ribosyl)glycinamide (formate route): step 1/1. Involved in the de novo purine biosynthesis. Catalyzes the transfer of formate to 5-phospho-ribosyl-glycinamide (GAR), producing 5-phospho-ribosyl-N-formylglycinamide (FGAR). Formate is provided by PurU via hydrolysis of 10-formyl-tetrahydrofolate. This chain is Formate-dependent phosphoribosylglycinamide formyltransferase, found in Shigella dysenteriae serotype 1 (strain Sd197).